The sequence spans 174 residues: Granulocyte colony-stimulating factor (174 aa).

2 disulfides stabilise this stretch: Cys36–Cys42 and Cys64–Cys74. A glycan (O-linked (GalNAc...) threonine) is linked at Thr133.

This sequence belongs to the IL-6 superfamily. In terms of assembly, monomer. In terms of processing, O-glycosylated.

It is found in the secreted. Its function is as follows. Granulocyte/macrophage colony-stimulating factors are cytokines that act in hematopoiesis by controlling the production, differentiation, and function of 2 related white cell populations of the blood, the granulocytes and the monocytes-macrophages. This CSF induces granulocytes. This is Granulocyte colony-stimulating factor (CSF3) from Ovis aries (Sheep).